We begin with the raw amino-acid sequence, 147 residues long: Hemoglobin subunit beta (147 aa).

The Globin domain maps to 3–147 (HWTAEEKQLI…VAHALARKYH (145 aa)). 2 residues coordinate heme b: histidine 64 and histidine 93.

This sequence belongs to the globin family. As to quaternary structure, heterotetramer of 2 alpha (or alpha-D) and 2 beta chains. Red blood cells.

Involved in oxygen transport from the lung to the various peripheral tissues. The beta chain is a component of adult hemoglobin A and D. The protein is Hemoglobin subunit beta (HBB) of Gallus gallus (Chicken).